The following is a 963-amino-acid chain: MAAHLKKRVYEEFTKVVQPQEEIATKKLRLTKPSKSAALHIDLCKATSPADALQYLLQFARKPVEAESVEGVVRILLEHYYKENDPSVRLKIASLLGLLSKTAGFSPDCIMDDAINILQNEKSHQVLAQLLDTLLAIGTKLPENQAIQMRLVDVACKHLTDTSHGVRNKCLQLLGNLGSLEKSVTKDAEGLAARDVQKIIGDYFSDQDPRVRTAAIKAMLQLHERGLKLHQTIYNQACKLLSDDYEQVRSAAVQLIWVVSQLYPESIVPIPSSNEEIRLVDDAFGKICHMVSDGSWVVRVQAAKLLGSMEQVSSHFLEQTLDKKLMSDLRRKRTAHERAKELYSSGEFSSGRKWGDDAPKEEVDTGAVNLIESGACGAFVHGLEDEMYEVRIAAVEALCMLAQSSPSFAEKCLDFLVDMFNDEIEEVRLQSIHTMRKISNNITLREDQLDTVLAVLEDSSRDIREALHELLCCTNVSTKEGIHLALVELLKNLTKYPTDRDSIWKCLKFLGSRHPTLVLPLVPELLSTHPFFDTAEPDMDDPAYIAVLVLIFNAAKTCPTMPALFSDHTFRHYAYLRDSLSHLVPALRLPGRKLVSSAVSPSIIPQEDPSQQFLQQSLERVYSLQHLDPQGAQELLEFTIRDLQRLGELQSELAGVADFSATYLRCQLLLIKALQEKLWNVAAPLYLKQSDLASAAAKQIMEETYKMEFMYSGVENKQVVIIHHMRLQAKALQLIVTARTTRGLDPLFGMCEKFLQEVDFFQRYFIADLPHLQDSFVDKLLDLMPRLMTSKPAEVVKILQTMLRQSAFLHLPLPEQIHKASATIIEPAGESDNPLRFTSGLVVALDVDATLEHVQDPQNTVKVQVLYPDGQAQMIHPKPADFRNPGPGRHRLITQVYLSHTAWTEACQVEVRLLLAYNSSARIPKCPWMEGGEMSPQVETSIEGTIPFSKPVKVYIMPKPARR.

The residue at position 26 (lysine 26) is an N6-acetyllysine. 8 HEAT repeats span residues 66 to 105, 145 to 183, 190 to 228, 229 to 263, 277 to 313, 369 to 405, 406 to 444, and 446 to 484; these read AESV…TAGF, QAIQ…LEKS, GLAA…RGLK, LHQT…SQLY, IRLV…EQVS, NLIE…AQSS, PSFA…NITL, and EDQL…GIHL. Lysine 791 is covalently cross-linked (Glycyl lysine isopeptide (Lys-Gly) (interchain with G-Cter in SUMO1); alternate). Lysine 791 is covalently cross-linked (Glycyl lysine isopeptide (Lys-Gly) (interchain with G-Cter in SUMO2); alternate).

It belongs to the Integrator subunit 4 family. As to quaternary structure, component of the Integrator complex, composed of core subunits INTS1, INTS2, INTS3, INTS4, INTS5, INTS6, INTS7, INTS8, INTS9/RC74, INTS10, INTS11/CPSF3L, INTS12, INTS13, INTS14 and INTS15. The core complex associates with protein phosphatase 2A subunits PPP2CA and PPP2R1A, to form the Integrator-PP2A (INTAC) complex. INTS4 is part of the RNA endonuclease subcomplex, composed of INTS4, INTS9, INTS11 and inositol hexakisphosphate (InsP6). Interacts with BRAT1; interaction is required for the assembly of the RNA endonuclease subcomplex.

It is found in the nucleus. Its subcellular location is the cytoplasm. Functionally, component of the integrator complex, a multiprotein complex that terminates RNA polymerase II (Pol II) transcription in the promoter-proximal region of genes. The integrator complex provides a quality checkpoint during transcription elongation by driving premature transcription termination of transcripts that are unfavorably configured for transcriptional elongation: the complex terminates transcription by (1) catalyzing dephosphorylation of the C-terminal domain (CTD) of Pol II subunit POLR2A/RPB1 and SUPT5H/SPT5, (2) degrading the exiting nascent RNA transcript via endonuclease activity and (3) promoting the release of Pol II from bound DNA. The integrator complex is also involved in terminating the synthesis of non-coding Pol II transcripts, such as enhancer RNAs (eRNAs), small nuclear RNAs (snRNAs), telomerase RNAs and long non-coding RNAs (lncRNAs). Within the integrator complex, INTS4 acts as an scaffold that links INTS9 and INTS11. Mediates recruitment of cytoplasmic dynein to the nuclear envelope, probably as component of the integrator complex. The sequence is that of Integrator complex subunit 4 from Homo sapiens (Human).